The sequence spans 350 residues: Spermidine/putrescine import ATP-binding protein PotA (350 aa).

The ABC transporter domain maps to 6-236 (LELRNISKQY…PENLWTAQFI (231 aa)). Position 38–45 (38–45 (GPSGCGKT)) interacts with ATP.

It belongs to the ABC transporter superfamily. Spermidine/putrescine importer (TC 3.A.1.11.1) family. In terms of assembly, the complex is composed of two ATP-binding proteins (PotA), two transmembrane proteins (PotB and PotC) and a solute-binding protein (PotD).

Its subcellular location is the cell membrane. It carries out the reaction ATP + H2O + polyamine-[polyamine-binding protein]Side 1 = ADP + phosphate + polyamineSide 2 + [polyamine-binding protein]Side 1.. Functionally, part of the ABC transporter complex PotABCD involved in spermidine/putrescine import. Responsible for energy coupling to the transport system. The chain is Spermidine/putrescine import ATP-binding protein PotA from Spiroplasma citri.